Here is a 324-residue protein sequence, read N- to C-terminus: Calpain-2 catalytic subunit (324 aa).

The segment at Tyr1–Asp138 is domain III. The tract at residues Glu139–Asp153 is linker. Residues Phe158 to Leu324 are domain IV. 16 residues coordinate Ca(2+): Ala166, Asp169, Glu171, Glu176, Asp209, Asp211, Ser213, Lys215, Glu220, Asp239, Asp241, Ser243, Thr245, Glu250, Asp282, and Asn285. EF-hand domains follow at residues Asp190 to Leu224 and Thr226 to Lys261.

The protein belongs to the peptidase C2 family. As to quaternary structure, forms a heterodimer with a small (regulatory) subunit (CAPNS1). Interacts with CPEB3; this leads to cleavage of CPEB3. Ca(2+) serves as cofactor. In terms of tissue distribution, ubiquitous.

The protein localises to the cytoplasm. The protein resides in the cell membrane. The catalysed reaction is Broad endopeptidase specificity.. Its activity is regulated as follows. Activated by 200-1000 micromolar concentrations of calcium and inhibited by calpastatin. Functionally, calcium-regulated non-lysosomal thiol-protease which catalyzes limited proteolysis of substrates involved in cytoskeletal remodeling and signal transduction. Proteolytically cleaves MYOC at 'Arg-226'. Proteolytically cleaves CPEB3 following neuronal stimulation which abolishes CPEB3 translational repressor activity, leading to translation of CPEB3 target mRNAs. This chain is Calpain-2 catalytic subunit (CAPN2), found in Sus scrofa (Pig).